A 237-amino-acid polypeptide reads, in one-letter code: Ribosomal RNA small subunit methyltransferase G (237 aa).

Residues G78, F83, 129–130 (AE), and R148 each bind S-adenosyl-L-methionine.

It belongs to the methyltransferase superfamily. RNA methyltransferase RsmG family.

It localises to the cytoplasm. In terms of biological role, specifically methylates the N7 position of a guanine in 16S rRNA. The polypeptide is Ribosomal RNA small subunit methyltransferase G (Streptococcus pyogenes serotype M4 (strain MGAS10750)).